The sequence spans 74 residues: Toxin Td6 (74 aa).

The signal sequence occupies residues 1–8 (IGMIVECE). Residues 9-71 (KEGYLMEANG…IWDSATNTCG (63 aa)) form the LCN-type CS-alpha/beta domain. 4 disulfide bridges follow: Cys19-Cys70, Cys23-Cys45, Cys31-Cys51, and Cys35-Cys53. At Arg72 the chain carries Arginine amide.

It belongs to the long (4 C-C) scorpion toxin superfamily. Sodium channel inhibitor family. Beta subfamily. Expressed by the venom gland.

The protein localises to the secreted. In terms of biological role, beta toxins bind voltage-independently at site-4 of sodium channels (Nav) and shift the voltage of activation toward more negative potentials thereby affecting sodium channel activation and promoting spontaneous and repetitive firing. The protein is Toxin Td6 of Tityus discrepans (Venezuelan scorpion).